Reading from the N-terminus, the 549-residue chain is Fas-activated serine/threonine kinase (549 aa).

A disordered region spans residues Met1–Pro30. Residues Val477–Gln535 form the RAP domain.

It belongs to the FAST protein kinase family. Interacts with TIA1; the interactions leads to TIA1 phosphorylation. Interacts with TIAR. Autophosphorylated on serine/threonine residues. Activated by dephosphorylation. In terms of tissue distribution, expressed in heart, brain, placenta, lung, liver, skeletal muscle, kidney and pancreas.

Its subcellular location is the mitochondrion matrix. It catalyses the reaction L-seryl-[Fas-activated protein] + ATP = O-phospho-L-seryl-[Fas-activated protein] + ADP + H(+). The catalysed reaction is L-threonyl-[Fas-activated protein] + ATP = O-phospho-L-threonyl-[Fas-activated protein] + ADP + H(+). The enzyme catalyses L-seryl-[protein] + ATP = O-phospho-L-seryl-[protein] + ADP + H(+). It carries out the reaction L-threonyl-[protein] + ATP = O-phospho-L-threonyl-[protein] + ADP + H(+). Phosphorylates the splicing regulator TIA1, thereby promoting the inclusion of FAS exon 6, which leads to an mRNA encoding a pro-apoptotic form of the receptor. Its function is as follows. Required for the biogenesis of some mitochondrial-encoded mRNAs, specifically stabilizes ND6 (NADH dehydrogenase complex subunit 6) mRNA, and regulates its levels. This is Fas-activated serine/threonine kinase (FASTK) from Homo sapiens (Human).